The primary structure comprises 398 residues: Immunoglobulin heavy constant gamma 2A (398 aa).

Ig-like domains follow at residues 5-97 (PSVY…KKIE), 120-219 (PSVF…RTIS), and 228-324 (PQVY…KSFS). 3 disulfides stabilise this stretch: cysteine 26/cysteine 81, cysteine 143/cysteine 203, and cysteine 249/cysteine 307. An N-linked (GlcNAc...) asparagine glycan is attached at asparagine 179. Residues 345–362 (GLWTTITIFISLFLLSVC) form a helical membrane-spanning segment. The Cytoplasmic portion of the chain corresponds to 363-398 (YSASVTLFKVKWIFSSVVELKQTISPDYRNMIGQGA).

The protein localises to the cell membrane. This chain is Immunoglobulin heavy constant gamma 2A, found in Mus musculus (Mouse).